Reading from the N-terminus, the 499-residue chain is Lysine--tRNA ligase (499 aa).

Positions 408 and 415 each coordinate Mg(2+).

The protein belongs to the class-II aminoacyl-tRNA synthetase family. Homodimer. Requires Mg(2+) as cofactor.

The protein localises to the cytoplasm. It catalyses the reaction tRNA(Lys) + L-lysine + ATP = L-lysyl-tRNA(Lys) + AMP + diphosphate. The chain is Lysine--tRNA ligase from Thermoanaerobacter pseudethanolicus (strain ATCC 33223 / 39E) (Clostridium thermohydrosulfuricum).